The sequence spans 437 residues: Ribosomal protein uS12 methylthiotransferase RimO (437 aa).

In terms of domain architecture, MTTase N-terminal spans 4-114 (PRIGFISLGC…VMNAVHEHLP (111 aa)). [4Fe-4S] cluster-binding residues include Cys13, Cys49, Cys78, Cys145, Cys149, and Cys152. A Radical SAM core domain is found at 131–368 (LTPRHYAYLK…MEVQERISAA (238 aa)). The 67-residue stretch at 371-437 (RTRIGRTETV…AHDLWARLAD (67 aa)) folds into the TRAM domain.

The protein belongs to the methylthiotransferase family. RimO subfamily. [4Fe-4S] cluster serves as cofactor.

It localises to the cytoplasm. The enzyme catalyses L-aspartate(89)-[ribosomal protein uS12]-hydrogen + (sulfur carrier)-SH + AH2 + 2 S-adenosyl-L-methionine = 3-methylsulfanyl-L-aspartate(89)-[ribosomal protein uS12]-hydrogen + (sulfur carrier)-H + 5'-deoxyadenosine + L-methionine + A + S-adenosyl-L-homocysteine + 2 H(+). Catalyzes the methylthiolation of an aspartic acid residue of ribosomal protein uS12. This Methylococcus capsulatus (strain ATCC 33009 / NCIMB 11132 / Bath) protein is Ribosomal protein uS12 methylthiotransferase RimO.